Consider the following 419-residue polypeptide: MDKLTIQASPPLAGDVIISGAKNAALPILMAGVLAETDFVVSNVPNLRDVSTSCKLLRCLGAEVTELGDGQIRISTTNLNEFCAPYDLVKTMRASILILGPLLARYGTADVSLPGGCAIGARPVNLHLHGLEMMGAKIEVKEGYIKARVDGRLKGAHIFMDMVSVGATENLLMAAALADGETVIENAAREPEVIDLANCLIAMGAKITGVGSATLRIQGVERLQGCEYRVMPDRIETGSFLVAAAVTRGRIRCLKADPASLESVIAKLEDAGAKITTGEDWIELDMEGKRPKAVNIKTAPYPGFPTDMQAQFCVLNALAQGTATITETIFENRFMHVPELIRMGATMELEGNTCIIQGIESLSGAQVMATDLRASASLVIAGLVADGKTIVDRIYHLDRGYEHIEQKFQGLGAHVERVQ.

Lysine 22 to asparagine 23 is a binding site for phosphoenolpyruvate. Residue arginine 93 participates in UDP-N-acetyl-alpha-D-glucosamine binding. Catalysis depends on cysteine 117, which acts as the Proton donor. Position 117 is a 2-(S-cysteinyl)pyruvic acid O-phosphothioketal (cysteine 117). Residues aspartate 307 and isoleucine 329 each coordinate UDP-N-acetyl-alpha-D-glucosamine.

Belongs to the EPSP synthase family. MurA subfamily.

It localises to the cytoplasm. The enzyme catalyses phosphoenolpyruvate + UDP-N-acetyl-alpha-D-glucosamine = UDP-N-acetyl-3-O-(1-carboxyvinyl)-alpha-D-glucosamine + phosphate. It participates in cell wall biogenesis; peptidoglycan biosynthesis. Cell wall formation. Adds enolpyruvyl to UDP-N-acetylglucosamine. The protein is UDP-N-acetylglucosamine 1-carboxyvinyltransferase of Shewanella putrefaciens (strain CN-32 / ATCC BAA-453).